We begin with the raw amino-acid sequence, 541 residues long: MNKPFLILLIALIAFSGCNMRKYFKPAKHQIKGEAYFPNHLQESIVSSNRYGAILKNGAVIGDKGLTQLRIGKNFNYESSFLNESQGFFILAQDCLNKIDKKTSKSRAAKTEETELKLKGVEAEVQDKVCHQVELISNNPNASQQSIVIPLETFALSASVKGNLLAVVLADNSANLYDITSQKLLFSEKGSPSTTINSLMAMPIFMDTVVVFPMLDGRLLVVDYVHGNPTPIRNIVISSDKFFNNITYLIVDGNNMIASTGKRILSVVSGQEFNYDGDIVDLLYDKGTLYVLTLDGQILQMDKSLRELNSVKLPFASLNTIVLNNNKLYSLEKRGYVIEVDLNDFDSYNVYKTPTIGSFKFFSSNRLDKGVFYDKNRVYYDRYYLDYNDFKPKLYPHAAEFKTSQKGEKGNAPIYLQERHKAKENKQPLEENKVKPRNSGFEEEEVKTRRPEPTKDQNNAIQQGETKNNESKNTPISKENAAKKEAPKPSSKEEKRRLKEEKKKAKAEQRAREFEQRAREHQERDEKELEERRKALEMNKK.

Basic and acidic residues-rich tracts occupy residues 420–434 and 446–455; these read HKAK…ENKV and VKTRRPEPTK. The segment at 420 to 541 is disordered; sequence HKAKENKQPL…RRKALEMNKK (122 aa). Residues 456-476 are compositionally biased toward polar residues; it reads DQNNAIQQGETKNNESKNTPI. Positions 480–541 are enriched in basic and acidic residues; the sequence is NAAKKEAPKP…RRKALEMNKK (62 aa).

It localises to the cell surface. Functionally, binds plasminogen, specifically, and in a concentration and lysine-dependent manner. Plasminogen is the precursor of plasmin, a serine protease that cleaves fibrin, fibronectin, laminin and vitronectin. Acquisition of plasminogen/plasmin could enable H.pylori to degrade host components. The chain is Plasminogen-binding protein PgbB (pgbB) from Helicobacter pylori (strain J99 / ATCC 700824) (Campylobacter pylori J99).